Consider the following 185-residue polypeptide: Threonylcarbamoyl-AMP synthase (185 aa).

Residues 3–185 (EQAPAEVKQV…IDAISGKILR (183 aa)) form the YrdC-like domain.

This sequence belongs to the SUA5 family. TsaC subfamily.

It is found in the cytoplasm. The enzyme catalyses L-threonine + hydrogencarbonate + ATP = L-threonylcarbamoyladenylate + diphosphate + H2O. In terms of biological role, required for the formation of a threonylcarbamoyl group on adenosine at position 37 (t(6)A37) in tRNAs that read codons beginning with adenine. Catalyzes the conversion of L-threonine, HCO(3)(-)/CO(2) and ATP to give threonylcarbamoyl-AMP (TC-AMP) as the acyladenylate intermediate, with the release of diphosphate. The chain is Threonylcarbamoyl-AMP synthase from Shewanella woodyi (strain ATCC 51908 / MS32).